The chain runs to 254 residues: 5-oxoprolinase subunit A (254 aa).

It belongs to the LamB/PxpA family. As to quaternary structure, forms a complex composed of PxpA, PxpB and PxpC.

The catalysed reaction is 5-oxo-L-proline + ATP + 2 H2O = L-glutamate + ADP + phosphate + H(+). In terms of biological role, catalyzes the cleavage of 5-oxoproline to form L-glutamate coupled to the hydrolysis of ATP to ADP and inorganic phosphate. This Burkholderia orbicola (strain MC0-3) protein is 5-oxoprolinase subunit A.